Consider the following 325-residue polypeptide: Glutarate 2-hydroxylase (325 aa).

Residues histidine 160, aspartate 162, and histidine 292 each coordinate Fe cation.

The protein belongs to the glutarate hydroxylase family. As to quaternary structure, homotetramer. Fe(2+) serves as cofactor.

It catalyses the reaction glutarate + 2-oxoglutarate + O2 = (S)-2-hydroxyglutarate + succinate + CO2. Its pathway is amino-acid degradation. Functionally, acts as an alpha-ketoglutarate-dependent dioxygenase catalyzing hydroxylation of glutarate (GA) to L-2-hydroxyglutarate (L2HG). Functions in a L-lysine degradation pathway that proceeds via cadaverine, glutarate and L-2-hydroxyglutarate. The polypeptide is Glutarate 2-hydroxylase (Salmonella newport (strain SL254)).